We begin with the raw amino-acid sequence, 95 residues long: MKAIGLPDDLIQKGKDIKGVSEVVQEGKHFKVTITTGSKMETMTGEKVKTVVRMEGDNKLVTTFKGIKSVTEFNGDTVXNXMTLGXIVFKRVSKR.

K13 and K18 each carry N6-succinyllysine. S21 carries the phosphoserine modification. K28 carries the N6-succinyllysine modification. At T33 the chain carries Phosphothreonine. At S38 the chain carries Phosphoserine. 3 positions are modified to N6-succinyllysine: K39, K47, and K59. S69 is subject to Phosphoserine. N6-succinyllysine is present on K90.

This sequence belongs to the calycin superfamily. Fatty-acid binding protein (FABP) family. Monomer.

The protein localises to the cytoplasm. Its function is as follows. This protein binds free fatty acids and their coenzyme A derivatives, bilirubin, and some other small molecules in the cytoplasm; it may be involved in intracellular lipid transport. The sequence is that of Fatty acid-binding protein, liver (FABP1) from Chaetophractus villosus (South American armadillo).